Reading from the N-terminus, the 249-residue chain is MAKQVLTYIDAKEFAYIIDSISVLVEEANFLIRNDGLYLRALDVSRTAMVDLAIPKESFEEFPEVEELRFGLNFKELKKLLRRVKKGDKISMEFEEGRVRIKLIGKSVRSIVVPSIEVVGEELPTPKVVYTAMVKAASDVLATAVKDADAVADEVKFEASEEALIISASSDKGEVEVKLDKNSELVYEFDVKEPASARFSLEYLVDITSKTSKISDIVTIELATAKPIYLSFDIPAGGKISYFIAPRVE.

This sequence belongs to the PCNA family. In terms of assembly, homotrimer. The subunits circularize to form a toroid; DNA passes through its center. Replication factor C (RFC) is required to load the toroid on the DNA.

Functionally, sliding clamp subunit that acts as a moving platform for DNA processing. Responsible for tethering the catalytic subunit of DNA polymerase and other proteins to DNA during high-speed replication. The sequence is that of DNA polymerase sliding clamp 1 from Pyrobaculum aerophilum (strain ATCC 51768 / DSM 7523 / JCM 9630 / CIP 104966 / NBRC 100827 / IM2).